A 301-amino-acid polypeptide reads, in one-letter code: Outer membrane porin G (301 aa).

An N-terminal signal peptide occupies residues 1 to 21 (MKKLLPCTALVMCAGMACAQA). The next 16 beta stranded transmembrane spans lie at 27–35 (WHFNIGAMY), 47–57 (MDGLAEPSVYF), 64–72 (WRIALAYYQ), 89–98 (RPELEVHYQF), 104–112 (FSFGLTGGF), 129–136 (NMQRWKIA), 149–158 (FNGWLSMYKF), 172–182 (VETETGLQYTF), 186–195 (VALRVNYYLE), 201–209 (DDSRNNGEF), 213–222 (EIRAYLPLTL), 230–238 (YTRIGLDRW), 240–248 (NWDWQDDIE), 254–265 (FNRVGLFYGYDF), 269–279 (LSVSLEYAFEW), and 289–300 (KFHYAGVGVNYS).

In terms of assembly, monomer.

It localises to the cell outer membrane. Its function is as follows. Forms channels functionally larger than those of classical porins. In terms of biological role, may act as a regulator of the RCS-phosphorelay signal transduction pathway. This Escherichia coli (strain K12) protein is Outer membrane porin G (ompG).